The primary structure comprises 387 residues: Phosphoglycerate kinase (387 aa).

Residues 21–23 (DLN), arginine 36, 59–62 (HLGR), arginine 114, and arginine 147 contribute to the substrate site. Residues lysine 198, glutamate 314, and 340 to 343 (GGDT) each bind ATP.

This sequence belongs to the phosphoglycerate kinase family. As to quaternary structure, monomer.

It is found in the cytoplasm. It catalyses the reaction (2R)-3-phosphoglycerate + ATP = (2R)-3-phospho-glyceroyl phosphate + ADP. It participates in carbohydrate degradation; glycolysis; pyruvate from D-glyceraldehyde 3-phosphate: step 2/5. This chain is Phosphoglycerate kinase, found in Erwinia tasmaniensis (strain DSM 17950 / CFBP 7177 / CIP 109463 / NCPPB 4357 / Et1/99).